Consider the following 163-residue polypeptide: Protein NAG1 (163 aa).

Residues 76–96 (ACFSVRIVLPLSLTISISALM) form a helical membrane-spanning segment.

The protein resides in the membrane. Functionally, involved in yeast cell wall biogenesis. The protein is Protein NAG1 (NAG1) of Saccharomyces cerevisiae (strain ATCC 204508 / S288c) (Baker's yeast).